Consider the following 229-residue polypeptide: Tubulin-specific chaperone B (229 aa).

Positions 170 to 212 constitute a CAP-Gly domain; sequence GATKFKEGVWVGVKYDEPVGKNDGSVAGVRYFDCDPKYGGFVR.

Belongs to the TBCB family. As to quaternary structure, supercomplex made of cofactors A to E. Cofactors A and D function by capturing and stabilizing tubulin in a quasi-native conformation. Cofactor E binds to the cofactor D-tubulin complex; interaction with cofactor C then causes the release of tubulin polypeptides that are committed to the native state.

The protein resides in the cytoplasm. The protein localises to the cytoskeleton. Its function is as follows. Binds to alpha-tubulin folding intermediates after their interaction with cytosolic chaperonin in the pathway leading from newly synthesized tubulin to properly folded heterodimer. The sequence is that of Tubulin-specific chaperone B from Caenorhabditis elegans.